Reading from the N-terminus, the 141-residue chain is Putative pre-16S rRNA nuclease (141 aa).

This sequence belongs to the YqgF nuclease family.

The protein resides in the cytoplasm. Its function is as follows. Could be a nuclease involved in processing of the 5'-end of pre-16S rRNA. This Coxiella burnetii (strain CbuK_Q154) (Coxiella burnetii (strain Q154)) protein is Putative pre-16S rRNA nuclease.